Here is a 619-residue protein sequence, read N- to C-terminus: Dihydroxy-acid dehydratase (619 aa).

Aspartate 81 contacts Mg(2+). Cysteine 122 provides a ligand contact to [2Fe-2S] cluster. Residues aspartate 123 and lysine 124 each coordinate Mg(2+). The residue at position 124 (lysine 124) is an N6-carboxylysine. Residue cysteine 201 coordinates [2Fe-2S] cluster. Position 496 (glutamate 496) interacts with Mg(2+). Serine 522 serves as the catalytic Proton acceptor.

This sequence belongs to the IlvD/Edd family. In terms of assembly, homodimer. [2Fe-2S] cluster is required as a cofactor. The cofactor is Mg(2+).

It catalyses the reaction (2R)-2,3-dihydroxy-3-methylbutanoate = 3-methyl-2-oxobutanoate + H2O. It carries out the reaction (2R,3R)-2,3-dihydroxy-3-methylpentanoate = (S)-3-methyl-2-oxopentanoate + H2O. The protein operates within amino-acid biosynthesis; L-isoleucine biosynthesis; L-isoleucine from 2-oxobutanoate: step 3/4. It functions in the pathway amino-acid biosynthesis; L-valine biosynthesis; L-valine from pyruvate: step 3/4. Its function is as follows. Functions in the biosynthesis of branched-chain amino acids. Catalyzes the dehydration of (2R,3R)-2,3-dihydroxy-3-methylpentanoate (2,3-dihydroxy-3-methylvalerate) into 2-oxo-3-methylpentanoate (2-oxo-3-methylvalerate) and of (2R)-2,3-dihydroxy-3-methylbutanoate (2,3-dihydroxyisovalerate) into 2-oxo-3-methylbutanoate (2-oxoisovalerate), the penultimate precursor to L-isoleucine and L-valine, respectively. In Burkholderia vietnamiensis (strain G4 / LMG 22486) (Burkholderia cepacia (strain R1808)), this protein is Dihydroxy-acid dehydratase.